A 333-amino-acid chain; its full sequence is Holliday junction branch migration complex subunit RuvB (333 aa).

The interval 1–182 is large ATPase domain (RuvB-L); sequence MDERLLSGES…FGVLSRLEYY (182 aa). Residues Leu21, Arg22, Gly63, Lys66, Thr67, Thr68, 129–131, Arg172, Tyr182, and Arg219 each bind ATP; that span reads EDF. Thr67 lines the Mg(2+) pocket. The small ATPAse domain (RuvB-S) stretch occupies residues 183 to 253; the sequence is TVDQLSAIVE…ITQMALELLQ (71 aa). The tract at residues 256-333 is head domain (RuvB-H); sequence KLGLDHIDHK…EHFGMEMPKV (78 aa). Residues Arg311 and Arg316 each contribute to the DNA site.

This sequence belongs to the RuvB family. As to quaternary structure, homohexamer. Forms an RuvA(8)-RuvB(12)-Holliday junction (HJ) complex. HJ DNA is sandwiched between 2 RuvA tetramers; dsDNA enters through RuvA and exits via RuvB. An RuvB hexamer assembles on each DNA strand where it exits the tetramer. Each RuvB hexamer is contacted by two RuvA subunits (via domain III) on 2 adjacent RuvB subunits; this complex drives branch migration. In the full resolvosome a probable DNA-RuvA(4)-RuvB(12)-RuvC(2) complex forms which resolves the HJ.

The protein resides in the cytoplasm. It carries out the reaction ATP + H2O = ADP + phosphate + H(+). In terms of biological role, the RuvA-RuvB-RuvC complex processes Holliday junction (HJ) DNA during genetic recombination and DNA repair, while the RuvA-RuvB complex plays an important role in the rescue of blocked DNA replication forks via replication fork reversal (RFR). RuvA specifically binds to HJ cruciform DNA, conferring on it an open structure. The RuvB hexamer acts as an ATP-dependent pump, pulling dsDNA into and through the RuvAB complex. RuvB forms 2 homohexamers on either side of HJ DNA bound by 1 or 2 RuvA tetramers; 4 subunits per hexamer contact DNA at a time. Coordinated motions by a converter formed by DNA-disengaged RuvB subunits stimulates ATP hydrolysis and nucleotide exchange. Immobilization of the converter enables RuvB to convert the ATP-contained energy into a lever motion, pulling 2 nucleotides of DNA out of the RuvA tetramer per ATP hydrolyzed, thus driving DNA branch migration. The RuvB motors rotate together with the DNA substrate, which together with the progressing nucleotide cycle form the mechanistic basis for DNA recombination by continuous HJ branch migration. Branch migration allows RuvC to scan DNA until it finds its consensus sequence, where it cleaves and resolves cruciform DNA. This chain is Holliday junction branch migration complex subunit RuvB, found in Bacillus cereus (strain Q1).